The chain runs to 165 residues: MAQITLRGNAINTVGELPAVGSPAPAFTLTGGDLGVISSDQFRGKSVLLNIFPSVDTPVCATSVRTFDERAAASGATVLCVSKDLPFAQKRFCGAEGTENVMPASAFRDSFGEDYGVTIADGPMAGLLARAIVVIGADGNVAYTELVPEIAQEPNYEAALAALGA.

A Thioredoxin domain is found at 18 to 165 (PAVGSPAPAF…YEAALAALGA (148 aa)). Cys-60 acts as the Cysteine sulfenic acid (-SOH) intermediate in catalysis. Residues Cys-60 and Cys-93 are joined by a disulfide bond.

Belongs to the peroxiredoxin family. Tpx subfamily. In terms of assembly, homodimer.

The enzyme catalyses a hydroperoxide + [thioredoxin]-dithiol = an alcohol + [thioredoxin]-disulfide + H2O. Its function is as follows. Thiol-specific peroxidase that catalyzes the reduction of hydrogen peroxide and organic hydroperoxides to water and alcohols, respectively. Plays a role in cell protection against oxidative stress by detoxifying peroxides. The polypeptide is Thiol peroxidase (Mycobacterium bovis (strain ATCC BAA-935 / AF2122/97)).